We begin with the raw amino-acid sequence, 518 residues long: Pre-glycoprotein polyprotein GP complex (518 aa).

The N-myristoyl glycine; by host moiety is linked to residue G2. Over 2–17 (GQVIGFFQSLPNIINE) the chain is Extracellular. Residues 18 to 33 (ALNIALICVALIAILK) form a helical membrane-spanning segment. The Cytoplasmic segment spans residues 34–58 (GIVNIWKSGLIQLFIFLILAGRSCS). C57 contacts Zn(2+). Over 59–456 (HTFQIGRNHE…QGSTPLSLVD (398 aa)) the chain is Extracellular. 4 disulfide bridges follow: C87/C258, C303/C316, C325/C334, and C388/C409. N-linked (GlcNAc...) asparagine; by host glycosylation is found at N90, N112, N127, N180, and N251. 4 N-linked (GlcNAc...) asparagine; by host glycosylation sites follow: N389, N397, N414, and N419. Residues 457 to 477 (LCFWSTLFYVTTLFAHLVGFP) form a helical membrane-spanning segment. The Cytoplasmic segment spans residues 478-518 (THRHILDGPCPKPHRLTKKGICSCGHFGIPGKPVRWVKRSR). 6 residues coordinate Zn(2+): H479, H481, C487, H491, C499, and C501.

The protein belongs to the arenaviridae GPC protein family. In terms of assembly, interacts with glycoprotein G2. Part of the GP complex (GP-C) together with glycoprotein G1 and glycoprotein G2. The GP-complex interacts with protein Z, which interacts with ribonucleocapsid; these interactions may induce virion budding. Homotrimer; disulfide-linked. In pre-fusion state, G1 homotrimers bind G2 homotrimers via ionic interactions. Part of the GP complex (GP-C) together with glycoprotein G2 and the stable signal peptide. The GP-complex interacts with protein Z, which interacts with ribonucleocapsid; these interactions may induce virion budding. As to quaternary structure, homotrimer. Interacts with the stable signal peptide. In pre-fusion state, G2 homotrimers bind G1 homotrimers via ionic interactions. Part of the GP complex (GP-C) together with glycoprotein G1 and the stable signal peptide. Acidification in the endosome triggers rearrangements, which ultimately leads to a 6 helix bundle formed by the two heptad repeat domains (HR1 and HR2) in post-fusion state. The GP-complex interacts with protein Z, which interacts with ribonucleocapsid; these interactions may induce virion budding. In terms of processing, specific enzymatic cleavages in vivo yield mature proteins. GP-C polyprotein is cleaved in the endoplasmic reticulum by the host protease MBTPS1. Only cleaved glycoprotein is incorporated into virions. The SSP remains stably associated with the GP complex following cleavage by signal peptidase and plays crucial roles in the trafficking of GP through the secretory pathway. Post-translationally, myristoylation is necessary for GP2-mediated fusion activity.

The protein localises to the virion membrane. Its subcellular location is the host endoplasmic reticulum membrane. It localises to the host Golgi apparatus membrane. It is found in the host cell membrane. In terms of biological role, functions as a cleaved signal peptide that is retained as the third component of the GP complex (GP-C). Helps to stabilize the spike complex in its native conformation. The SSP is required for efficient glycoprotein expression, post-translational maturation cleavage of G1 and G2, glycoprotein transport to the cell surface plasma membrane, formation of infectious virus particles, and acid pH-dependent glycoprotein-mediated cell fusion. Functionally, forms the virion spikes together with glycoprotein G2. The glycoprotein spike trimers are connected to the underlying matrix. Mediates virus attachment to host receptor alpha-dystroglycan DAG1. This attachment induces virion internalization predominantly through clathrin- and caveolin-independent endocytosis. Its function is as follows. Forms the virion spikes together with glycoprotein G1. The glycoprotein spike trimers are connected to the underlying matrix. Class I viral fusion protein that directs fusion of viral and host endosomal membranes, leading to delivery of the nucleocapsid into the cytoplasm. Membrane fusion is mediated by irreversible conformational changes induced by acidification. This is Pre-glycoprotein polyprotein GP complex from Bolomys (OLVV).